A 108-amino-acid polypeptide reads, in one-letter code: ATP-dependent Clp protease adapter protein ClpS (108 aa).

The segment covering 1–15 has biased composition (basic and acidic residues); sequence MPHESSPDSQHEHGV. A disordered region spans residues 1–22; the sequence is MPHESSPDSQHEHGVAVEAARP.

It belongs to the ClpS family. Binds to the N-terminal domain of the chaperone ClpA.

Its function is as follows. Involved in the modulation of the specificity of the ClpAP-mediated ATP-dependent protein degradation. In Stenotrophomonas maltophilia (strain K279a), this protein is ATP-dependent Clp protease adapter protein ClpS.